The following is a 375-amino-acid chain: Tyrosine--tRNA ligase (375 aa).

5 residues coordinate L-tyrosine: Tyr-37, Tyr-168, Gln-172, Asp-175, and Gln-190. The short motif at 251–255 (KMSKS) is the 'KMSKS' region element. Lys-254 lines the ATP pocket.

The protein belongs to the class-I aminoacyl-tRNA synthetase family. TyrS type 4 subfamily. As to quaternary structure, homodimer.

It localises to the cytoplasm. It catalyses the reaction tRNA(Tyr) + L-tyrosine + ATP = L-tyrosyl-tRNA(Tyr) + AMP + diphosphate + H(+). Its function is as follows. Catalyzes the attachment of tyrosine to tRNA(Tyr) in a two-step reaction: tyrosine is first activated by ATP to form Tyr-AMP and then transferred to the acceptor end of tRNA(Tyr). In Pyrococcus abyssi (strain GE5 / Orsay), this protein is Tyrosine--tRNA ligase.